The chain runs to 349 residues: ATPase GET3 (349 aa).

26-33 (KGGVGKTT) provides a ligand contact to ATP. Asp-57 is an active-site residue. Residues Glu-240 and Asn-267 each contribute to the ATP site. Zn(2+) contacts are provided by Cys-280 and Cys-283.

Belongs to the arsA ATPase family. In terms of assembly, homodimer. Component of the Golgi to ER traffic (GET) complex, which is composed of GET1, GET2 and GET3. Within the complex, GET1 and GET2 form a heterotetramer which is stabilized by phosphatidylinositol binding and which binds to the GET3 homodimer. Interacts with the chloride channel protein GEF1.

Its subcellular location is the cytoplasm. The protein localises to the endoplasmic reticulum. It is found in the golgi apparatus. Its function is as follows. ATPase required for the post-translational delivery of tail-anchored (TA) proteins to the endoplasmic reticulum. Recognizes and selectively binds the transmembrane domain of TA proteins in the cytosol. This complex then targets to the endoplasmic reticulum by membrane-bound receptors GET1 and GET2, where the tail-anchored protein is released for insertion. This process is regulated by ATP binding and hydrolysis. ATP binding drives the homodimer towards the closed dimer state, facilitating recognition of newly synthesized TA membrane proteins. ATP hydrolysis is required for insertion. Subsequently, the homodimer reverts towards the open dimer state, lowering its affinity for the GET1-GET2 receptor, and returning it to the cytosol to initiate a new round of targeting. Cooperates with the HDEL receptor ERD2 to mediate the ATP-dependent retrieval of resident ER proteins that contain a C-terminal H-D-E-L retention signal from the Golgi to the ER. Involved in low-level resistance to the oxyanions arsenite and arsenate, and in heat tolerance. In Lachancea thermotolerans (strain ATCC 56472 / CBS 6340 / NRRL Y-8284) (Yeast), this protein is ATPase GET3.